Reading from the N-terminus, the 5148-residue chain is E3 ubiquitin-protein ligase RNF213 (5148 aa).

A compositionally biased stretch (polar residues) spans 38-48; sequence DNTLVVSSTPE. Positions 38 to 341 are disordered; the sequence is DNTLVVSSTP…QAAAPEPTSA (304 aa). The span at 69–78 shows a compositional bias: basic and acidic residues; sequence PGKELEKPEE. Positions 101 to 113 are enriched in polar residues; it reads GTISSSEAPSSGL. Positions 130 to 146 are enriched in low complexity; the sequence is PQNQAQQGGAASQPGHP. The residue at position 196 (Ser-196) is a Phosphoserine. Basic and acidic residues-rich tracts occupy residues 233–245, 257–267, and 279–289; these read SKGETSGQEKKVP, AGKETGEDVRK, and KHGDQEAELKG. The span at 319–335 shows a compositional bias: low complexity; it reads AAAVKTQQAAAPQQAAA. A Glycyl lysine isopeptide (Lys-Gly) (interchain with G-Cter in SUMO2) cross-link involves residue Lys-1128. Residues 1957–1962, Glu-2060, Ala-2114, Asp-2116, and Arg-2177 contribute to the ATP site; that span reads GVGKSL. Ser-2234 bears the Phosphoserine mark. Residues Lys-2460 and Ser-2535 each coordinate ATP. Residues 3435–3465 adopt a coiled-coil conformation; the sequence is EEMEIETSQSKELAEEQMEVEDSEEMKKASD. Positions 3947, 3950, 3962, 3964, 3967, 3970, 3982, 3985, 4451, and 4455 each coordinate Zn(2+). Residues 3947 to 3986 form an RING-type zinc finger; that stretch reads CFICHGDAQDPVCLPCDHVYCLRCIQTWLIPGQMMCPYCL. An RZ-type zinc finger spans residues 4429-4501; that stretch reads MPEDLLVHAR…IRNNEDRTQT (73 aa). Cys-4462 (nucleophile; for E3 ubiquitin-lipopolysaccharide ligase activity) is an active-site residue. Zn(2+) is bound by residues Cys-4471 and Cys-4474.

This sequence belongs to the AAA ATPase family. In terms of assembly, monomer. Interacts with UBE2L3/UBCH7; UBE2L3/UBCH7 is the most efficient ubiquitin-conjugating enzyme E2 for the ubiquitin ligase activity. Interacts with UBE2N/UBC13; promoting 'Lys-63'-linked ubiquitination of target proteins.

It localises to the cytoplasm. It is found in the cytosol. Its subcellular location is the lipid droplet. It carries out the reaction S-ubiquitinyl-[E2 ubiquitin-conjugating enzyme]-L-cysteine + [acceptor protein]-L-lysine = [E2 ubiquitin-conjugating enzyme]-L-cysteine + N(6)-ubiquitinyl-[acceptor protein]-L-lysine.. It catalyses the reaction ATP + H2O = ADP + phosphate + H(+). It participates in protein modification; protein ubiquitination. Atypical E3 ubiquitin ligase that can catalyze ubiquitination of both proteins and lipids, and which is involved in various processes, such as lipid metabolism, angiogenesis and cell-autonomous immunity. Acts as a key immune sensor by catalyzing ubiquitination of the lipid A moiety of bacterial lipopolysaccharide (LPS) via its RZ-type zinc-finger: restricts the proliferation of cytosolic bacteria, such as Salmonella, by generating the bacterial ubiquitin coat through the ubiquitination of LPS. Also acts indirectly by mediating the recruitment of the LUBAC complex, which conjugates linear polyubiquitin chains. Ubiquitination of LPS triggers cell-autonomous immunity, such as antibacterial autophagy, leading to degradation of the microbial invader. Involved in lipid metabolism by regulating fat storage and lipid droplet formation; act by inhibiting the lipolytic process. Also regulates lipotoxicity by inhibiting desaturation of fatty acids. Also acts as an E3 ubiquitin-protein ligase via its RING-type zinc finger: mediates 'Lys-63'-linked ubiquitination of target proteins. Involved in the non-canonical Wnt signaling pathway in vascular development: acts by mediating ubiquitination and degradation of FLNA and NFATC2 downstream of RSPO3, leading to inhibit the non-canonical Wnt signaling pathway and promoting vessel regression. Also has ATPase activity; ATPase activity is required for ubiquitination of LPS. This chain is E3 ubiquitin-protein ligase RNF213, found in Mus musculus (Mouse).